A 233-amino-acid polypeptide reads, in one-letter code: 2,3,4,5-tetrahydropyridine-2,6-dicarboxylate N-acetyltransferase (233 aa).

The protein belongs to the transferase hexapeptide repeat family. DapH subfamily.

It carries out the reaction (S)-2,3,4,5-tetrahydrodipicolinate + acetyl-CoA + H2O = L-2-acetamido-6-oxoheptanedioate + CoA. Its pathway is amino-acid biosynthesis; L-lysine biosynthesis via DAP pathway; LL-2,6-diaminopimelate from (S)-tetrahydrodipicolinate (acetylase route): step 1/3. Its function is as follows. Catalyzes the transfer of an acetyl group from acetyl-CoA to tetrahydrodipicolinate. This chain is 2,3,4,5-tetrahydropyridine-2,6-dicarboxylate N-acetyltransferase, found in Oenococcus oeni (strain ATCC BAA-331 / PSU-1).